The following is a 347-amino-acid chain: Photosystem II protein D1 (347 aa).

3 helical membrane-spanning segments follow: residues 32-49 (YIGW…LATV), 121-136 (HFIL…EWEF), and 145-159 (WIFV…AASA). H121 lines the chlorophyll a pocket. Y129 contacts pheophytin a. The [CaMn4O5] cluster site is built by D173 and E192. Residues 200–221 (FHILGVAAVFGGSLFSAMHGSL) form a helical membrane-spanning segment. H201 is a chlorophyll a binding site. Residues H218 and 267–268 (SF) each bind a quinone. A Fe cation-binding site is contributed by H218. H275 lines the Fe cation pocket. A helical membrane pass occupies residues 277–291 (FLAAWPVIGIWFTAL). 4 residues coordinate [CaMn4O5] cluster: H335, E336, D345, and A347.

Belongs to the reaction center PufL/M/PsbA/D family. PSII is composed of 1 copy each of membrane proteins PsbA, PsbB, PsbC, PsbD, PsbE, PsbF, PsbH, PsbI, PsbJ, PsbK, PsbL, PsbM, PsbT, PsbX, PsbY, PsbZ, Psb30/Ycf12, at least 3 peripheral proteins of the oxygen-evolving complex and a large number of cofactors. It forms dimeric complexes. The cofactor is The D1/D2 heterodimer binds P680, chlorophylls that are the primary electron donor of PSII, and subsequent electron acceptors. It shares a non-heme iron and each subunit binds pheophytin, quinone, additional chlorophylls, carotenoids and lipids. D1 provides most of the ligands for the Mn4-Ca-O5 cluster of the oxygen-evolving complex (OEC). There is also a Cl(-1) ion associated with D1 and D2, which is required for oxygen evolution. The PSII complex binds additional chlorophylls, carotenoids and specific lipids.. Tyr-164 forms a radical intermediate that is referred to as redox-active TyrZ, YZ or Y-Z.

It localises to the plastid. The protein resides in the chloroplast thylakoid membrane. The enzyme catalyses 2 a plastoquinone + 4 hnu + 2 H2O = 2 a plastoquinol + O2. Functionally, photosystem II (PSII) is a light-driven water:plastoquinone oxidoreductase that uses light energy to abstract electrons from H(2)O, generating O(2) and a proton gradient subsequently used for ATP formation. It consists of a core antenna complex that captures photons, and an electron transfer chain that converts photonic excitation into a charge separation. The D1/D2 (PsbA/PsbD) reaction center heterodimer binds P680, the primary electron donor of PSII as well as several subsequent electron acceptors. This is Photosystem II protein D1 from Heterocapsa niei (Dinoflagellate).